Here is a 315-residue protein sequence, read N- to C-terminus: Acetyl-coenzyme A carboxylase carboxyl transferase subunit alpha (315 aa).

The CoA carboxyltransferase C-terminal domain occupies 40–293 (LQDKSKTLTE…RAELSSQLAM (254 aa)).

This sequence belongs to the AccA family. Acetyl-CoA carboxylase is a heterohexamer composed of biotin carboxyl carrier protein (AccB), biotin carboxylase (AccC) and two subunits each of ACCase subunit alpha (AccA) and ACCase subunit beta (AccD).

Its subcellular location is the cytoplasm. It catalyses the reaction N(6)-carboxybiotinyl-L-lysyl-[protein] + acetyl-CoA = N(6)-biotinyl-L-lysyl-[protein] + malonyl-CoA. The protein operates within lipid metabolism; malonyl-CoA biosynthesis; malonyl-CoA from acetyl-CoA: step 1/1. In terms of biological role, component of the acetyl coenzyme A carboxylase (ACC) complex. First, biotin carboxylase catalyzes the carboxylation of biotin on its carrier protein (BCCP) and then the CO(2) group is transferred by the carboxyltransferase to acetyl-CoA to form malonyl-CoA. The polypeptide is Acetyl-coenzyme A carboxylase carboxyl transferase subunit alpha (Pseudomonas fluorescens (strain Pf0-1)).